A 411-amino-acid polypeptide reads, in one-letter code: Histone-lysine N-methyltransferase SUV39H1-A (411 aa).

Residues 43–101 enclose the Chromo domain; the sequence is YEVEYLCNYKKHKGREFFLVKWKGYEESENTWEPLKNLKCPILLHQFRKDMKAALLQAN. A Pre-SET domain is found at 178–239; the sequence is VGCECEDCVS…DCANRVVQRG (62 aa). Residues Cys180, Cys182, Cys185, Cys193, Cys194, Cys221, Cys225, Cys227, and Cys231 each coordinate Zn(2+). Residues 242 to 365 enclose the SET domain; sequence YDLCIFKTDN…AGEELTFDYK (124 aa). Residues 253 to 255, Tyr296, and 322 to 323 each bind S-adenosyl-L-methionine; these read RGW and NH. Positions 325, 399, 401, and 406 each coordinate Zn(2+). Residues 395 to 411 form the Post-SET domain; the sequence is VHMECKCGVRNCRKYLF.

Belongs to the class V-like SAM-binding methyltransferase superfamily. Histone-lysine methyltransferase family. Suvar3-9 subfamily. Expressed ubuitiously.

The protein localises to the nucleus. Its subcellular location is the chromosome. It is found in the centromere. The catalysed reaction is N(6)-methyl-L-lysyl(9)-[histone H3] + S-adenosyl-L-methionine = N(6),N(6)-dimethyl-L-lysyl(9)-[histone H3] + S-adenosyl-L-homocysteine + H(+). The enzyme catalyses N(6),N(6)-dimethyl-L-lysyl(9)-[histone H3] + S-adenosyl-L-methionine = N(6),N(6),N(6)-trimethyl-L-lysyl(9)-[histone H3] + S-adenosyl-L-homocysteine + H(+). In terms of biological role, histone methyltransferase that specifically trimethylates 'Lys-9' of histone H3 using monomethylated H3 'Lys-9' as substrate. H3 'Lys-9' trimethylation represents a specific tag for epigenetic transcriptional repression by recruiting HP1 (CBX1, CBX3 and/or CBX5) proteins to methylated histones. Mainly functions in heterochromatin regions, thereby playing a central role in the establishment of constitutive heterochromatin at pericentric and telomere regions. H3 'Lys-9' trimethylation is also required to direct DNA methylation at pericentric repeats. SUV39H1 is targeted to histone H3 via its interaction with RB1 and is involved in many processes, such as regulation of organ-specific terminal differentiation during development. This is Histone-lysine N-methyltransferase SUV39H1-A (suv39h1a) from Danio rerio (Zebrafish).